Reading from the N-terminus, the 877-residue chain is Alanine--tRNA ligase (877 aa).

Zn(2+)-binding residues include His-565, His-569, Cys-667, and His-671.

Belongs to the class-II aminoacyl-tRNA synthetase family. Zn(2+) is required as a cofactor.

Its subcellular location is the cytoplasm. The catalysed reaction is tRNA(Ala) + L-alanine + ATP = L-alanyl-tRNA(Ala) + AMP + diphosphate. In terms of biological role, catalyzes the attachment of alanine to tRNA(Ala) in a two-step reaction: alanine is first activated by ATP to form Ala-AMP and then transferred to the acceptor end of tRNA(Ala). Also edits incorrectly charged Ser-tRNA(Ala) and Gly-tRNA(Ala) via its editing domain. The sequence is that of Alanine--tRNA ligase from Chromobacterium violaceum (strain ATCC 12472 / DSM 30191 / JCM 1249 / CCUG 213 / NBRC 12614 / NCIMB 9131 / NCTC 9757 / MK).